The sequence spans 116 residues: Small ribosomal subunit protein uS13 (116 aa).

Residues 92–116 (RRGLPVRGQNTKNNARTRKGAKRSR) are disordered. Positions 106 to 116 (ARTRKGAKRSR) are enriched in basic residues.

The protein belongs to the universal ribosomal protein uS13 family. Part of the 30S ribosomal subunit. Forms a loose heterodimer with protein S19. Forms two bridges to the 50S subunit in the 70S ribosome.

Located at the top of the head of the 30S subunit, it contacts several helices of the 16S rRNA. In the 70S ribosome it contacts the 23S rRNA (bridge B1a) and protein L5 of the 50S subunit (bridge B1b), connecting the 2 subunits; these bridges are implicated in subunit movement. Contacts the tRNAs in the A and P-sites. In Lactobacillus delbrueckii subsp. bulgaricus (strain ATCC 11842 / DSM 20081 / BCRC 10696 / JCM 1002 / NBRC 13953 / NCIMB 11778 / NCTC 12712 / WDCM 00102 / Lb 14), this protein is Small ribosomal subunit protein uS13.